Consider the following 585-residue polypeptide: Pentatricopeptide repeat-containing protein At4g21170 (585 aa).

PPR repeat units lie at residues 152–186 (LSVS…RLSP), 187–221 (SQSA…GIVS), 222–247 (DELT…KLME), 252–286 (SCKI…KLEL), 287–321 (SFCS…KFVT), 324–358 (DSAV…ETVR), 360–394 (WDST…GITV), 396–431 (DESC…GFVP), 432–466 (CTHK…EVYF), 467–501 (DSFA…KGSL), 502–534 (DVNA…MKEI), and 538–572 (NSKS…GLKP).

This sequence belongs to the PPR family. P subfamily.

In Arabidopsis thaliana (Mouse-ear cress), this protein is Pentatricopeptide repeat-containing protein At4g21170.